A 366-amino-acid polypeptide reads, in one-letter code: Inactive PGL/p-HBAD biosynthesis glycosyltransferase Mb2982c (366 aa).

Disordered stretches follow at residues 1–23 (MEET…PNAA) and 295–366 (DGDR…HGGP). Positions 295–311 (DGDRGHRWPEPPEERAG) are enriched in basic and acidic residues.

Belongs to the UDP-glycosyltransferase family.

The chain is Inactive PGL/p-HBAD biosynthesis glycosyltransferase Mb2982c from Mycobacterium bovis (strain ATCC BAA-935 / AF2122/97).